Here is a 177-residue protein sequence, read N- to C-terminus: Peptide deformylase (177 aa).

2 residues coordinate Fe cation: C98 and H140. E141 is a catalytic residue. Residue H144 participates in Fe cation binding.

It belongs to the polypeptide deformylase family. Fe(2+) serves as cofactor.

It carries out the reaction N-terminal N-formyl-L-methionyl-[peptide] + H2O = N-terminal L-methionyl-[peptide] + formate. Its function is as follows. Removes the formyl group from the N-terminal Met of newly synthesized proteins. Requires at least a dipeptide for an efficient rate of reaction. N-terminal L-methionine is a prerequisite for activity but the enzyme has broad specificity at other positions. This is Peptide deformylase from Zymomonas mobilis subsp. mobilis (strain ATCC 31821 / ZM4 / CP4).